The primary structure comprises 442 residues: F-box/FBD/LRR-repeat protein At3g14710 (442 aa).

In terms of domain architecture, F-box spans 26–73 (DKFSSLLESVVSIILSQLPTAEAVSTSVLSKSWKNIWTNITDLHFDDT). 3 LRR repeats span residues 126-147 (NLQR…SLFP), 151-172 (SLVE…AILP), and 173-194 (NLKF…SKNL). In terms of domain architecture, FBD spans 370-414 (VESPDCVTTMLKVLQIRNFKPNRLQISVLRYVLDNAEILGSVILS).

The polypeptide is F-box/FBD/LRR-repeat protein At3g14710 (Arabidopsis thaliana (Mouse-ear cress)).